Here is a 726-residue protein sequence, read N- to C-terminus: AP-1 complex subunit beta-1 (726 aa).

This sequence belongs to the adaptor complexes large subunit family. In terms of assembly, adaptor protein complex 1 (AP-1) is a heterotetramer composed of two large adaptins (gamma-type subunit APL4 and beta-type subunit APL2), a medium adaptin (mu-type subunit APM1) and a small adaptin (sigma-type subunit APS1). Interacts with CHC1. Interacts with APM2, probably forming an alternative AP-1-like complex.

The protein resides in the cell membrane. Its subcellular location is the membrane. It localises to the coated pit. Functionally, adaptins are components of the adaptor complexes which link clathrin to receptors in coated vesicles. Clathrin-associated protein complexes are believed to interact with the cytoplasmic tails of membrane proteins, leading to their selection and concentration. The AP-1 complex interacts directly with clathrin. In Saccharomyces cerevisiae (strain ATCC 204508 / S288c) (Baker's yeast), this protein is AP-1 complex subunit beta-1 (APL2).